Here is a 305-residue protein sequence, read N- to C-terminus: UDP-3-O-acyl-N-acetylglucosamine deacetylase (305 aa).

Zn(2+) is bound by residues His-78, His-237, and Asp-241. His-264 (proton donor) is an active-site residue.

This sequence belongs to the LpxC family. Zn(2+) serves as cofactor.

The enzyme catalyses a UDP-3-O-[(3R)-3-hydroxyacyl]-N-acetyl-alpha-D-glucosamine + H2O = a UDP-3-O-[(3R)-3-hydroxyacyl]-alpha-D-glucosamine + acetate. It functions in the pathway glycolipid biosynthesis; lipid IV(A) biosynthesis; lipid IV(A) from (3R)-3-hydroxytetradecanoyl-[acyl-carrier-protein] and UDP-N-acetyl-alpha-D-glucosamine: step 2/6. In terms of biological role, catalyzes the hydrolysis of UDP-3-O-myristoyl-N-acetylglucosamine to form UDP-3-O-myristoylglucosamine and acetate, the committed step in lipid A biosynthesis. This chain is UDP-3-O-acyl-N-acetylglucosamine deacetylase, found in Burkholderia lata (strain ATCC 17760 / DSM 23089 / LMG 22485 / NCIMB 9086 / R18194 / 383).